We begin with the raw amino-acid sequence, 225 residues long: Insulin-induced gene 2 protein (225 aa).

Topologically, residues 1 to 28 (MAEGETESPRPKKCGPYISSVTSQSVNV) are cytoplasmic. A helical membrane pass occupies residues 29–51 (VIRGVVLFFIGVFLALVLNLLQI). The Lumenal portion of the chain corresponds to 52–70 (QRNVTLFPPDVITSIFSSA). The helical transmembrane segment at 71-88 (WWVPPCCGTASAVIGLLY) threads the bilayer. Over 89–103 (PCIDRHLGEPHKFKR) the chain is Cytoplasmic. The chain crosses the membrane as a helical span at residues 104–126 (EWSSVMRCVAVFVGINHASAKVD). Residues 127–129 (FDN) lie on the Lumenal side of the membrane. A helical membrane pass occupies residues 130-148 (NFQFSLTLAALSVGLWWTF). Topologically, residues 149–153 (DRSRS) are cytoplasmic. Residue Ser151 is modified to Phosphoserine. Residues 154–175 (GFGLGVGIAFLATVVTQLLVYN) traverse the membrane as a helical segment. Residues 176-189 (GVYQYTSPDFLYVR) lie on the Lumenal side of the membrane. A helical membrane pass occupies residues 190–207 (SWLPCIFFAGGITMGNIG). Topologically, residues 208 to 225 (RQLAMYECKVIAEKSHQE) are cytoplasmic. Cys215 carries the post-translational modification Cysteine sulfenic acid (-SOH); alternate. Cys215 is covalently cross-linked (Glycyl cysteine thioester (Cys-Gly) (interchain with G-Cter in ubiquitin); alternate). Residues 219-225 (AEKSHQE) carry the KxHxx motif.

This sequence belongs to the INSIG family. Interacts with SCAP; interaction is direct and only takes place in the presence of sterols; it prevents interaction between SCAP and the coat protein complex II (COPII). Associates with the SCAP-SREBP complex (composed of SCAP and SREBF1/SREBP1 or SREBF2/SREBP2); association is mediated via its interaction with SCAP and only takes place in the presence of sterols. Interacts with RNF139. Interacts with RNF145. Post-translationally, phosphorylation at Ser-151 by PCK1 reduces binding to oxysterol, disrupting the interaction between INSIG2 and SCAP, thereby promoting nuclear translocation of SREBP proteins (SREBF1/SREBP1 or SREBF2/SREBP2) and subsequent transcription of downstream lipogenesis-related genes. In terms of processing, polyubiquitinated by AMFR/gp78 at Cys-215 in some tissues such as adipose tissues, undifferentiated myoblasts and liver, leading to its degradation. In differentiated myotubes, Cys-215 oxidation prevents ubiquitination at the same site, resulting in protein stabilization. Oxidized at Cys-215 in differentiated myotubes, preventing ubiquitination at the same site, and resulting in protein stabilization. As to expression, expressed in liver, testis, kidney, spleen, intestine, brain and adrenal gland.

The protein resides in the endoplasmic reticulum membrane. Its function is as follows. Oxysterol-binding protein that mediates feedback control of cholesterol synthesis by controlling both endoplasmic reticulum to Golgi transport of SCAP and degradation of HMGCR. Acts as a negative regulator of cholesterol biosynthesis by mediating the retention of the SCAP-SREBP complex in the endoplasmic reticulum, thereby blocking the processing of sterol regulatory element-binding proteins (SREBPs) SREBF1/SREBP1 and SREBF2/SREBP2. Binds oxysterol, including 22-hydroxycholesterol, 24-hydroxycholesterol, 25-hydroxycholesterol and 27-hydroxycholesterol, regulating interaction with SCAP and retention of the SCAP-SREBP complex in the endoplasmic reticulum. In presence of oxysterol, interacts with SCAP, retaining the SCAP-SREBP complex in the endoplasmic reticulum, thereby preventing SCAP from escorting SREBF1/SREBP1 and SREBF2/SREBP2 to the Golgi. Sterol deprivation or phosphorylation by PCK1 reduce oxysterol-binding, disrupting the interaction between INSIG2 and SCAP, thereby promoting Golgi transport of the SCAP-SREBP complex, followed by processing and nuclear translocation of SREBF1/SREBP1 and SREBF2/SREBP2. Also regulates cholesterol synthesis by regulating degradation of HMGCR: initiates the sterol-mediated ubiquitin-mediated endoplasmic reticulum-associated degradation (ERAD) of HMGCR via recruitment of the reductase to the ubiquitin ligase RNF139. The chain is Insulin-induced gene 2 protein from Mus musculus (Mouse).